Here is a 429-residue protein sequence, read N- to C-terminus: RNA-binding protein BRN2 (429 aa).

RRM domains lie at Val-12–Gly-93, His-100–Thr-180, and Ala-330–Asp-408. Residues Gly-410–Ser-429 form a disordered region. Residues Ser-418 to Ser-429 are compositionally biased toward polar residues.

As to expression, expressed in roots, stems, flowers and siliques.

The protein resides in the cytoplasm. Its function is as follows. RNA-binding protein involved in the regulation of flowering time. Acts as a repressor of the activity of SOC1, a transcriptional activator of flowering time. Binds to the 3'-UTR of SOC1 mRNA in the cytoplasm and participates in SOC1 mRNA decay, mediated by the distal region of the SOC1 3'-UTR. In Arabidopsis thaliana (Mouse-ear cress), this protein is RNA-binding protein BRN2.